The chain runs to 357 residues: Uroporphyrinogen decarboxylase (357 aa).

Substrate is bound by residues 27–31, Asp-77, Tyr-154, Ser-209, and His-330; that span reads RQAGR.

The protein belongs to the uroporphyrinogen decarboxylase family. In terms of assembly, homodimer.

Its subcellular location is the cytoplasm. It carries out the reaction uroporphyrinogen III + 4 H(+) = coproporphyrinogen III + 4 CO2. It functions in the pathway porphyrin-containing compound metabolism; protoporphyrin-IX biosynthesis; coproporphyrinogen-III from 5-aminolevulinate: step 4/4. Functionally, catalyzes the decarboxylation of four acetate groups of uroporphyrinogen-III to yield coproporphyrinogen-III. The sequence is that of Uroporphyrinogen decarboxylase from Acinetobacter baumannii (strain SDF).